Reading from the N-terminus, the 44-residue chain is Cytochrome b559 subunit beta (44 aa).

A helical membrane pass occupies residues 19-35 (WLSVHALGVPSVFFLGA). A heme-binding site is contributed by histidine 23.

It belongs to the PsbE/PsbF family. Heterodimer of an alpha subunit and a beta subunit. PSII is composed of 1 copy each of membrane proteins PsbA, PsbB, PsbC, PsbD, PsbE, PsbF, PsbH, PsbI, PsbJ, PsbK, PsbL, PsbM, PsbT, PsbX, PsbY, PsbZ, Psb30/Ycf12, peripheral proteins PsbO, CyanoQ (PsbQ), PsbU, PsbV and a large number of cofactors. It forms dimeric complexes. Heme b serves as cofactor.

It localises to the cellular thylakoid membrane. In terms of biological role, this b-type cytochrome is tightly associated with the reaction center of photosystem II (PSII). PSII is a light-driven water:plastoquinone oxidoreductase that uses light energy to abstract electrons from H(2)O, generating O(2) and a proton gradient subsequently used for ATP formation. It consists of a core antenna complex that captures photons, and an electron transfer chain that converts photonic excitation into a charge separation. The sequence is that of Cytochrome b559 subunit beta from Synechococcus elongatus (strain ATCC 33912 / PCC 7942 / FACHB-805) (Anacystis nidulans R2).